A 493-amino-acid polypeptide reads, in one-letter code: ATP synthase subunit beta, chloroplastic (493 aa).

Position 170-177 (170-177 (GGAGVGKT)) interacts with ATP.

The protein belongs to the ATPase alpha/beta chains family. In terms of assembly, F-type ATPases have 2 components, CF(1) - the catalytic core - and CF(0) - the membrane proton channel. CF(1) has five subunits: alpha(3), beta(3), gamma(1), delta(1), epsilon(1). CF(0) has four main subunits: a(1), b(1), b'(1) and c(9-12).

It is found in the plastid. Its subcellular location is the chloroplast thylakoid membrane. The catalysed reaction is ATP + H2O + 4 H(+)(in) = ADP + phosphate + 5 H(+)(out). Produces ATP from ADP in the presence of a proton gradient across the membrane. The catalytic sites are hosted primarily by the beta subunits. The sequence is that of ATP synthase subunit beta, chloroplastic from Chaetosphaeridium globosum (Charophycean green alga).